The primary structure comprises 405 residues: Glycosylated lysosomal membrane protein A (405 aa).

A signal peptide spans 1-25 (MGCTRGWRLLLLLGLVCVGALQGRG). Over 26 to 365 (QEESREVSLQ…YGEPPRDSFS (340 aa)) the chain is Lumenal. N-linked (GlcNAc...) asparagine glycans are attached at residues Asn-55, Asn-86, Asn-125, Asn-129, Asn-143, Asn-153, Asn-157, Asn-164, Asn-169, Asn-179, Asn-206, Asn-222, Asn-267, Asn-304, and Asn-331. Residues 366–386 (ILVICIMAVALGTPLLLLIVG) traverse the membrane as a helical segment. Over 387-405 (TLVVTALRHKVYSNYEPIN) the chain is Cytoplasmic. Residues 401–405 (YEPIN) carry the Lysosomal targeting motif motif.

The protein belongs to the GLMP family. In terms of assembly, interacts (via lumenal domain) with lysosomal protein MFSD1; the interaction starts while both proteins are still in the endoplasmic reticulum and is required for stabilization of MFSD1 in lysosomes but has no direct effect on its targeting to lysosomes or transporter activity.

The protein resides in the lysosome membrane. In terms of biological role, required to protect lysosomal transporter MFSD1 from lysosomal proteolysis and for MFSD1 lysosomal localization. The chain is Glycosylated lysosomal membrane protein A (glmp-a) from Xenopus laevis (African clawed frog).